Consider the following 35-residue polypeptide: MSDIN-like toxin proprotein 6 (35 aa).

Positions 1 to 10 are excised as a propeptide; the sequence is MSDINTTRLP. A cross-link (cyclopeptide (Phe-Pro)) is located at residues 11–18; the sequence is FVFVASPP. A propeptide spanning residues 19 to 35 is cleaved from the precursor; the sequence is CVGDDIAMVLTRGENLC.

The protein belongs to the MSDIN fungal toxin family. Processed by the macrocyclase-peptidase enzyme POPB to yield a toxic cyclic octapeptide. POPB first removes 10 residues from the N-terminus. Conformational trapping of the remaining peptide forces the enzyme to release this intermediate rather than proceed to macrocyclization. The enzyme rebinds the remaining peptide in a different conformation and catalyzes macrocyclization of the N-terminal 8 residues. In terms of tissue distribution, expressed in basidiocarps.

In terms of biological role, probable toxin that belongs to the MSDIN-like toxin family responsible for a large number of food poisoning cases and deaths. In Amanita exitialis (Guangzhou destroying angel), this protein is MSDIN-like toxin proprotein 6.